Consider the following 149-residue polypeptide: Protein E4.1 (149 aa).

The polypeptide is Protein E4.1 (Snake adenovirus serotype 1 (SnAdV-1)).